An 870-amino-acid chain; its full sequence is NEDD4-like E3 ubiquitin-protein ligase WWP2 (870 aa).

The C2 domain occupies 1–117 (MASASSSRAG…KNNGGKMENM (117 aa)). A disordered region spans residues 151–299 (VPNGSALTDG…QQLPAAAQAP (149 aa)). Composition is skewed to polar residues over residues 152-171 (PNGS…SSGT) and 200-210 (SARTTPATGEQ). Residue serine 211 is modified to Phosphoserine. Polar residues-rich tracts occupy residues 222–243 (VKNS…TTAT) and 263–272 (VTPNPNTTSL). The span at 290-299 (QQLPAAAQAP) shows a compositional bias: low complexity. 4 WW domains span residues 300–333 (DALP…RPLP), 330–363 (RPLP…RPTA), 405–437 (GPLP…DPRT), and 444–477 (PALP…DPRP). Residues 536-870 (KPYDLRRRLY…IEETEGFGQE (335 aa)) enclose the HECT domain. Cysteine 838 functions as the Glycyl thioester intermediate in the catalytic mechanism.

Interacts with POU5F1, RBP1, EGR2 and SLC11A2. Interacts with SCNN1A, SCNN1B, SCNN1G, WBP1, WBP2 and ATN1. Interacts with ERBB4, NDFIP1 and NDFIP2. Interacts with ARRDC4. Interacts (via WW domains) with ARRDC1 (via PPxY motifs); ubiquitinates ARRDC1. Interacts (via WW domains) with ARRDC2 and ARRDC3. In terms of assembly, (Microbial infection) Interacts with adenovirus type 2 PIII. Post-translationally, autoubiquitinated. Ubiquitinated by the SCF(FBXL15) complex, leading to its degradation by the proteasome. As to expression, detected in heart, throughout the brain, placenta, lung, liver, muscle, kidney and pancreas. Also detected in spleen and peripheral blood leukocytes.

It is found in the nucleus. It carries out the reaction S-ubiquitinyl-[E2 ubiquitin-conjugating enzyme]-L-cysteine + [acceptor protein]-L-lysine = [E2 ubiquitin-conjugating enzyme]-L-cysteine + N(6)-ubiquitinyl-[acceptor protein]-L-lysine.. The protein operates within protein modification; protein ubiquitination. Its activity is regulated as follows. Activated by NDFIP1- and NDFIP2-binding. In terms of biological role, E3 ubiquitin-protein ligase which accepts ubiquitin from an E2 ubiquitin-conjugating enzyme in the form of a thioester and then directly transfers the ubiquitin to targeted substrates. Polyubiquitinates POU5F1 by 'Lys-63'-linked conjugation and promotes it to proteasomal degradation; in embryonic stem cells (ESCs) the ubiquitination is proposed to regulate POU5F1 protein level. Ubiquitinates EGR2 and promotes it to proteasomal degradation; in T-cells the ubiquitination inhibits activation-induced cell death. Ubiquitinates SLC11A2; the ubiquitination is enhanced by presence of NDFIP1 and NDFIP2. Ubiquitinates RPB1 and promotes it to proteasomal degradation. The sequence is that of NEDD4-like E3 ubiquitin-protein ligase WWP2 (WWP2) from Homo sapiens (Human).